Here is a 70-residue protein sequence, read N- to C-terminus: Turripeptide Gsg9.2 (70 aa).

Residues 1–20 (MKVYCLLLVLLVGLVSQAHG) form the signal peptide. Residues 21–70 (QLDKKCQMVCTMDYRPVCGSDGRTYPNKCTLTSTACMSQRSITVFHDGEC) enclose the Kazal-like domain. 3 cysteine pairs are disulfide-bonded: Cys26-Cys56, Cys30-Cys49, and Cys38-Cys70.

Belongs to the conopeptide P-like superfamily. As to expression, expressed by the venom duct.

Its subcellular location is the secreted. Its function is as follows. Acts as a neurotoxin by inhibiting an ion channel. May also act as a serine protease inhibitor, since it possess the kazal serine protease inhibitor signature. In Gemmula sogodensis (Gem-turris), this protein is Turripeptide Gsg9.2.